The chain runs to 384 residues: Bifunctional enzyme IspD/IspF (384 aa).

Positions 1-226 are 2-C-methyl-D-erythritol 4-phosphate cytidylyltransferase; sequence MAKTVVLVVA…RCLFDGPGEV (226 aa). The segment at 227-384 is 2-C-methyl-D-erythritol 2,4-cyclodiphosphate synthase; sequence RSASGYDVHR…QAMASVWLPR (158 aa). Residues D233 and H235 each coordinate a divalent metal cation. Residues 233–235 and 260–261 contribute to the 4-CDP-2-C-methyl-D-erythritol 2-phosphate site; these read DVH and HS. H268 is an a divalent metal cation binding site. Residues 282–284, 358–361, F365, and R368 each bind 4-CDP-2-C-methyl-D-erythritol 2-phosphate; these read DIG and TTTE.

This sequence in the N-terminal section; belongs to the IspD/TarI cytidylyltransferase family. IspD subfamily. The protein in the C-terminal section; belongs to the IspF family. It depends on a divalent metal cation as a cofactor.

The enzyme catalyses 2-C-methyl-D-erythritol 4-phosphate + CTP + H(+) = 4-CDP-2-C-methyl-D-erythritol + diphosphate. The catalysed reaction is 4-CDP-2-C-methyl-D-erythritol 2-phosphate = 2-C-methyl-D-erythritol 2,4-cyclic diphosphate + CMP. The protein operates within isoprenoid biosynthesis; isopentenyl diphosphate biosynthesis via DXP pathway; isopentenyl diphosphate from 1-deoxy-D-xylulose 5-phosphate: step 2/6. It functions in the pathway isoprenoid biosynthesis; isopentenyl diphosphate biosynthesis via DXP pathway; isopentenyl diphosphate from 1-deoxy-D-xylulose 5-phosphate: step 4/6. Bifunctional enzyme that catalyzes the formation of 4-diphosphocytidyl-2-C-methyl-D-erythritol from CTP and 2-C-methyl-D-erythritol 4-phosphate (MEP) (IspD), and catalyzes the conversion of 4-diphosphocytidyl-2-C-methyl-D-erythritol 2-phosphate (CDP-ME2P) to 2-C-methyl-D-erythritol 2,4-cyclodiphosphate (ME-CPP) with a corresponding release of cytidine 5-monophosphate (CMP) (IspF). The sequence is that of Bifunctional enzyme IspD/IspF from Paramagnetospirillum magneticum (strain ATCC 700264 / AMB-1) (Magnetospirillum magneticum).